The sequence spans 1058 residues: Protein translocase subunit SECA2, chloroplastic (1058 aa).

The transit peptide at M1–S58 directs the protein to the chloroplast. Residue M167–T174 coordinates ATP.

It belongs to the SecA family. Part of a second Sec protein translocation apparatus. Interacts probably with SCY2.

The protein localises to the plastid. Its subcellular location is the chloroplast membrane. The enzyme catalyses ATP + H2O + chloroplast-proteinSide 1 = ADP + phosphate + chloroplast-proteinSide 2.. Involved in protein export. Probably interacts with other proteins to allow the postimport or conservative sorting pathway for inner membrane proteins in plastids. May have a central role in coupling the hydrolysis of ATP to the transfer of proteins across the membrane. The chain is Protein translocase subunit SECA2, chloroplastic from Arabidopsis thaliana (Mouse-ear cress).